A 285-amino-acid chain; its full sequence is CCR4-NOT transcription complex subunit 7 (285 aa).

The a divalent metal cation site is built by Asp-40, Glu-42, Asp-161, Asp-230, and Glu-278.

It belongs to the CAF1 family. In terms of assembly, component of the CCR4-NOT complex. Mn(2+) is required as a cofactor. Mg(2+) serves as cofactor. It depends on Co(2+) as a cofactor.

The protein localises to the nucleus. It localises to the cytoplasm. It carries out the reaction Exonucleolytic cleavage of poly(A) to 5'-AMP.. Has 3'-5' poly(A) exoribonuclease activity for synthetic poly(A) RNA substrate. Catalytic component of the CCR4-NOT complex which is one of the major cellular mRNA deadenylases and is linked to various cellular processes including bulk mRNA degradation, miRNA-mediated repression, translational repression during translational initiation and general transcription regulation. During miRNA-mediated repression the complex also seems to act as translational repressor during translational initiation. Additional complex functions may be a consequence of its influence on mRNA expression. The chain is CCR4-NOT transcription complex subunit 7 (cnot7) from Xenopus tropicalis (Western clawed frog).